Consider the following 474-residue polypeptide: Methylenetetrahydrofolate--tRNA-(uracil-5-)-methyltransferase TrmFO (474 aa).

14 to 19 (GGGLAG) provides a ligand contact to FAD.

Belongs to the MnmG family. TrmFO subfamily. Requires FAD as cofactor.

Its subcellular location is the cytoplasm. It catalyses the reaction uridine(54) in tRNA + (6R)-5,10-methylene-5,6,7,8-tetrahydrofolate + NADH + H(+) = 5-methyluridine(54) in tRNA + (6S)-5,6,7,8-tetrahydrofolate + NAD(+). It carries out the reaction uridine(54) in tRNA + (6R)-5,10-methylene-5,6,7,8-tetrahydrofolate + NADPH + H(+) = 5-methyluridine(54) in tRNA + (6S)-5,6,7,8-tetrahydrofolate + NADP(+). Catalyzes the folate-dependent formation of 5-methyl-uridine at position 54 (M-5-U54) in all tRNAs. The polypeptide is Methylenetetrahydrofolate--tRNA-(uracil-5-)-methyltransferase TrmFO (Caulobacter vibrioides (strain ATCC 19089 / CIP 103742 / CB 15) (Caulobacter crescentus)).